The primary structure comprises 281 residues: Ribosomal RNA small subunit methyltransferase A (281 aa).

S-adenosyl-L-methionine contacts are provided by N25, L27, G52, E73, D99, and N118.

This sequence belongs to the class I-like SAM-binding methyltransferase superfamily. rRNA adenine N(6)-methyltransferase family. RsmA subfamily.

Its subcellular location is the cytoplasm. It catalyses the reaction adenosine(1518)/adenosine(1519) in 16S rRNA + 4 S-adenosyl-L-methionine = N(6)-dimethyladenosine(1518)/N(6)-dimethyladenosine(1519) in 16S rRNA + 4 S-adenosyl-L-homocysteine + 4 H(+). Specifically dimethylates two adjacent adenosines (A1518 and A1519) in the loop of a conserved hairpin near the 3'-end of 16S rRNA in the 30S particle. May play a critical role in biogenesis of 30S subunits. The protein is Ribosomal RNA small subunit methyltransferase A of Erythrobacter litoralis (strain HTCC2594).